The primary structure comprises 650 residues: DNA ligase (650 aa).

NAD(+)-binding positions include 30–34 and 79–80; these read DEQYD and SL. The active-site N6-AMP-lysine intermediate is the Lys-110. NAD(+) contacts are provided by Arg-131, Glu-165, and Lys-304. Zn(2+) contacts are provided by Cys-398, Cys-401, Cys-414, and Cys-419. The 78-residue stretch at 573–650 folds into the BRCT domain; the sequence is DNNNVFFNKT…EEEFLAQINK (78 aa).

This sequence belongs to the NAD-dependent DNA ligase family. LigA subfamily. The cofactor is Mg(2+). Mn(2+) serves as cofactor.

It catalyses the reaction NAD(+) + (deoxyribonucleotide)n-3'-hydroxyl + 5'-phospho-(deoxyribonucleotide)m = (deoxyribonucleotide)n+m + AMP + beta-nicotinamide D-nucleotide.. Functionally, DNA ligase that catalyzes the formation of phosphodiester linkages between 5'-phosphoryl and 3'-hydroxyl groups in double-stranded DNA using NAD as a coenzyme and as the energy source for the reaction. It is essential for DNA replication and repair of damaged DNA. The sequence is that of DNA ligase from Helicobacter hepaticus (strain ATCC 51449 / 3B1).